Here is a 104-residue protein sequence, read N- to C-terminus: MNTLQRLEATIAARRNADPDSSYVARLNAKGLPKMAEKVGEEATETVIAALTGSDEELVGEGADLIFHLLVLLQARGVSLDQVLAELDRREGLSGLDEKAKRGD.

This sequence belongs to the PRA-PH family.

It localises to the cytoplasm. It catalyses the reaction 1-(5-phospho-beta-D-ribosyl)-ATP + H2O = 1-(5-phospho-beta-D-ribosyl)-5'-AMP + diphosphate + H(+). Its pathway is amino-acid biosynthesis; L-histidine biosynthesis; L-histidine from 5-phospho-alpha-D-ribose 1-diphosphate: step 2/9. The protein is Phosphoribosyl-ATP pyrophosphatase of Erythrobacter litoralis (strain HTCC2594).